The following is a 152-amino-acid chain: Endoribonuclease YbeY (152 aa).

Positions 114, 118, and 124 each coordinate Zn(2+).

It belongs to the endoribonuclease YbeY family. The cofactor is Zn(2+).

It is found in the cytoplasm. In terms of biological role, single strand-specific metallo-endoribonuclease involved in late-stage 70S ribosome quality control and in maturation of the 3' terminus of the 16S rRNA. In Wigglesworthia glossinidia brevipalpis, this protein is Endoribonuclease YbeY.